The chain runs to 525 residues: Peptide chain release factor 3 (525 aa).

The tr-type G domain occupies 8–276 (AMRRTFAIIS…AFVKEAPPPQ (269 aa)). GTP contacts are provided by residues 17 to 24 (SHPDAGKT), 85 to 89 (DTPGH), and 139 to 142 (NKMD).

Belongs to the TRAFAC class translation factor GTPase superfamily. Classic translation factor GTPase family. PrfC subfamily.

The protein localises to the cytoplasm. Its function is as follows. Increases the formation of ribosomal termination complexes and stimulates activities of RF-1 and RF-2. It binds guanine nucleotides and has strong preference for UGA stop codons. It may interact directly with the ribosome. The stimulation of RF-1 and RF-2 is significantly reduced by GTP and GDP, but not by GMP. The chain is Peptide chain release factor 3 from Coxiella burnetii (strain CbuK_Q154) (Coxiella burnetii (strain Q154)).